Consider the following 196-residue polypeptide: Putative lipopolysaccharide biosynthesis O-acetyl transferase WbbJ (196 aa).

Belongs to the transferase hexapeptide repeat family.

Its pathway is bacterial outer membrane biogenesis; lipopolysaccharide biosynthesis. Putative O-acetyltransferase that transfers an O-acetyl group to the O antigen. This Escherichia coli (strain K12) protein is Putative lipopolysaccharide biosynthesis O-acetyl transferase WbbJ (wbbJ).